The following is a 503-amino-acid chain: Aromatase (503 aa).

Helical transmembrane passes span 19-39 (EVMPVATLPILLLTGFLFFVW) and 51-71 (GYCMGIGPLISHLRFLWMGLG). The tract at residues 294–324 (ENVNQCILEMMIAAPDTLSVTVFFMLCLIAQ) is substrate-binding pocket. Aspartate 309 and methionine 374 together coordinate substrate. Cysteine 437 serves as a coordination point for heme.

This sequence belongs to the cytochrome P450 family. Requires heme as cofactor. Expressed in placenta. Highly expressed in follicles (0 hour:hCG), followed by a drop (12-24 hour:hCG) and by an increase (30-39 hour:hCG). Highly expressed in corpora lutea. Also expressed in granulosa cell layer. Not expressed in theca interna.

It is found in the endoplasmic reticulum membrane. The protein resides in the microsome membrane. The enzyme catalyses testosterone + 3 reduced [NADPH--hemoprotein reductase] + 3 O2 = 17beta-estradiol + formate + 3 oxidized [NADPH--hemoprotein reductase] + 4 H2O + 4 H(+). The catalysed reaction is androst-4-ene-3,17-dione + 3 reduced [NADPH--hemoprotein reductase] + 3 O2 = estrone + formate + 3 oxidized [NADPH--hemoprotein reductase] + 4 H2O + 4 H(+). It catalyses the reaction androst-4-ene-3,17-dione + reduced [NADPH--hemoprotein reductase] + O2 = 19-hydroxyandrost-4-ene-3,17-dione + oxidized [NADPH--hemoprotein reductase] + H2O + H(+). It carries out the reaction 19-hydroxyandrost-4-ene-3,17-dione + reduced [NADPH--hemoprotein reductase] + O2 = 19-oxo-androst-4-ene-3,17-dione + oxidized [NADPH--hemoprotein reductase] + 2 H2O + H(+). The enzyme catalyses 19-oxo-androst-4-ene-3,17-dione + reduced [NADPH--hemoprotein reductase] + O2 = estrone + formate + oxidized [NADPH--hemoprotein reductase] + H2O + 2 H(+). The catalysed reaction is estrone + reduced [NADPH--hemoprotein reductase] + O2 = 2-hydroxyestrone + oxidized [NADPH--hemoprotein reductase] + H2O + H(+). It catalyses the reaction 17beta-hydroxy-5alpha-androstan-3-one + reduced [NADPH--hemoprotein reductase] + O2 = 17beta,19-dihydroxy-3-oxo-5alpha-androstanone + oxidized [NADPH--hemoprotein reductase] + H2O + H(+). It carries out the reaction 17beta,19-dihydroxy-3-oxo-5alpha-androstanone + reduced [NADPH--hemoprotein reductase] + O2 = 17beta-hydroxy-3,19-dioxo-5alpha-androstanone + oxidized [NADPH--hemoprotein reductase] + 2 H2O + H(+). The enzyme catalyses 17beta-hydroxy-3,19-dioxo-5alpha-androstanone + reduced [NADPH--hemoprotein reductase] + O2 = 17beta-hydroxy-3-oxo-19-nor-5alpha-androst-1-ene + formate + oxidized [NADPH--hemoprotein reductase] + H2O + 2 H(+). It functions in the pathway steroid hormone biosynthesis. In terms of biological role, a cytochrome P450 monooxygenase that catalyzes the conversion of C19 androgens, androst-4-ene-3,17-dione (androstenedione) and testosterone to the C18 estrogens, estrone and estradiol, respectively. Catalyzes three successive oxidations of C19 androgens: two conventional oxidations at C19 yielding 19-hydroxy and 19-oxo/19-aldehyde derivatives, followed by a third oxidative aromatization step that involves C1-beta hydrogen abstraction combined with cleavage of the C10-C19 bond to yield a phenolic A ring and formic acid. Alternatively, the third oxidative reaction yields a 19-norsteroid and formic acid. Converts dihydrotestosterone to delta1,10-dehydro 19-nordihydrotestosterone and may play a role in homeostasis of this potent androgen. Also displays 2-hydroxylase activity toward estrone. Mechanistically, uses molecular oxygen inserting one oxygen atom into a substrate, and reducing the second into a water molecule, with two electrons provided by NADPH via cytochrome P450 reductase (CPR; NADPH-ferrihemoprotein reductase). This Equus caballus (Horse) protein is Aromatase (CYP19A1).